Reading from the N-terminus, the 601-residue chain is Protein nubbin (601 aa).

A compositionally biased stretch (basic and acidic residues) spans 1 to 25; the sequence is MVMSELRWHTASPEDNKNSLKRDLL. 5 disordered regions span residues 1–32, 49–94, 121–158, 351–425, and 581–601; these read MVMSELRWHTASPEDNKNSLKRDLLKSTPTSA, SRSP…AKRQ, KQEEDYDDANGGALNLTSDNSRHSTQSPSNSVKSATAS, PASS…ETTD, and INPSLDSPTGADDDESSYMMH. Over residues 49-68 the composition is skewed to low complexity; that stretch reads SRSPSPLQSNASDCDDNNSS. Polar residues predominate over residues 135 to 157; sequence NLTSDNSRHSTQSPSNSVKSATA. A compositionally biased stretch (low complexity) spans 384–415; it reads TPSTPTSGTQMSQGTTTPQPKTVASAAAARAA. The POU-specific domain maps to 421-495; that stretch reads EETTDLEELE…LLQKWLDDAD (75 aa). Positions 523–582 form a DNA-binding region, homeobox; it reads RRKKRTSIETTIRGALEKAFLANQKPTSEEITQLADRLSMEKEVVRVWFCNRRQKEKRIN. Positions 591–601 are enriched in acidic residues; it reads ADDDESSYMMH.

It belongs to the POU transcription factor family. Class-2 subfamily. As to expression, initial expression in cellular blastoderm stage, then in ectodermal stripes during germband extension. Broad expression in the neuroectoderm followed by limitation to discrete subsets of CNS cells, and expression in specific PNS neurons and support cells.

It is found in the nucleus. Its function is as follows. DNA-binding regulatory protein implicated in early development. Involved in neuronal cell fate decision. Repressed directly or indirectly by the BX-C homeotic proteins. The protein is Protein nubbin (nub) of Drosophila melanogaster (Fruit fly).